The sequence spans 485 residues: Aspartyl/glutamyl-tRNA(Asn/Gln) amidotransferase subunit B (485 aa).

It belongs to the GatB/GatE family. GatB subfamily. Heterotrimer of A, B and C subunits.

It catalyses the reaction L-glutamyl-tRNA(Gln) + L-glutamine + ATP + H2O = L-glutaminyl-tRNA(Gln) + L-glutamate + ADP + phosphate + H(+). It carries out the reaction L-aspartyl-tRNA(Asn) + L-glutamine + ATP + H2O = L-asparaginyl-tRNA(Asn) + L-glutamate + ADP + phosphate + 2 H(+). Allows the formation of correctly charged Asn-tRNA(Asn) or Gln-tRNA(Gln) through the transamidation of misacylated Asp-tRNA(Asn) or Glu-tRNA(Gln) in organisms which lack either or both of asparaginyl-tRNA or glutaminyl-tRNA synthetases. The reaction takes place in the presence of glutamine and ATP through an activated phospho-Asp-tRNA(Asn) or phospho-Glu-tRNA(Gln). In Borrelia hermsii (strain HS1 / DAH), this protein is Aspartyl/glutamyl-tRNA(Asn/Gln) amidotransferase subunit B.